We begin with the raw amino-acid sequence, 172 residues long: Mitochondrial import inner membrane translocase subunit Tim17-B (172 aa).

C9 and C78 form a disulfide bridge. The next 3 helical transmembrane spans lie at 17 to 37, 61 to 77, and 113 to 133; these read CGGA…IKGF, QIGG…STID, and VGSA…GILL. A disordered region spans residues 147 to 172; that stretch reads FLEDPSQLTPKEGSPAPGYPNYQQYH.

The protein belongs to the Tim17/Tim22/Tim23 family. In terms of assembly, component of the TIM23 complex at least composed of TIMM23, TIMM17 (TIMM17A or TIMM17B) and TIMM50. The complex interacts with the TIMM44 component of the PAM complex. The complex also interacts with DNAJC15.

It localises to the mitochondrion inner membrane. Functionally, essential component of the TIM23 complex, a complex that mediates the translocation of transit peptide-containing proteins across the mitochondrial inner membrane. The sequence is that of Mitochondrial import inner membrane translocase subunit Tim17-B (Timm17b) from Mus musculus (Mouse).